We begin with the raw amino-acid sequence, 210 residues long: Phosphoribosyl-dephospho-CoA transferase (210 aa).

Catalysis depends on residues D135 and D137.

The protein belongs to the MdcG family.

The catalysed reaction is apo-[malonate decarboxylase ACP] + 2'-(5''-triphospho-alpha-D-ribosyl)-3'-dephospho-CoA = holo-[malonate decarboxylase ACP] + diphosphate. Transfers 2'-(5-triphosphoribosyl)-3'-dephosphocoenzyme-A to the apo-[acyl-carrier-protein] of the malonate decarboxylase to yield holo-[acyl-carrier-protein]. The polypeptide is Phosphoribosyl-dephospho-CoA transferase (Pseudomonas aeruginosa (strain ATCC 15692 / DSM 22644 / CIP 104116 / JCM 14847 / LMG 12228 / 1C / PRS 101 / PAO1)).